A 523-amino-acid polypeptide reads, in one-letter code: UDP-glucuronosyltransferase 3A2 (523 aa).

A signal peptide spans 1 to 22 (MAAHRRWLLMSFLFLEVILLEA). Over 23–487 (AKILTISTLS…QPWHEQYMLD (465 aa)) the chain is Extracellular. Asparagine 52 carries an N-linked (GlcNAc...) asparagine glycan. The chain crosses the membrane as a helical span at residues 488 to 508 (VFLFLLGLMLGTLWLSVKVLV). Residues 509-523 (AVTRYLSIATKVKEA) lie on the Cytoplasmic side of the membrane.

Belongs to the UDP-glycosyltransferase family. Highly expressed in kidney, while it is expressed at low levels in liver. Not detected in other tissues examined.

It is found in the membrane. The enzyme catalyses glucuronate acceptor + UDP-alpha-D-glucuronate = acceptor beta-D-glucuronoside + UDP + H(+). Its function is as follows. UDP-glucuronosyltransferases catalyze phase II biotransformation reactions in which lipophilic substrates are conjugated with glucuronic acid to increase water solubility and enhance excretion. They are of major importance in the conjugation and subsequent elimination of potentially toxic xenobiotics and endogenous compounds. This Mus musculus (Mouse) protein is UDP-glucuronosyltransferase 3A2 (Ugt3a2).